A 135-amino-acid polypeptide reads, in one-letter code: MKVAVLXAAGGIQALALLLKTSLYDIAPVTPGVAVDLSHIPTDVKIKGFSGEDATPALEGADVVLISAGVARKPGMDRSDLFNVNAGIVKNLVQQIAKTCPQACIGIITNPVNTTVAIAAEVLKKAGVYDKNKLF.

Residues 7-12 and Asp25 each bind NAD(+); that span reads XAAGGI. Substrate-binding residues include Arg72 and Arg78. NAD(+)-binding positions include Asn85 and 108–110; that span reads ITN. Asn110 provides a ligand contact to substrate.

The protein belongs to the LDH/MDH superfamily. MDH type 1 family. In terms of assembly, homodimer.

It catalyses the reaction (S)-malate + NAD(+) = oxaloacetate + NADH + H(+). Catalyzes the reversible oxidation of malate to oxaloacetate. The protein is Malate dehydrogenase (mdh) of Klebsiella pneumoniae.